A 268-amino-acid chain; its full sequence is Undecaprenyl-diphosphatase (268 aa).

8 helical membrane passes run 3-23 (VFNL…EFIP), 46-66 (FEVL…SAKL), 84-104 (FGIL…HGFI), 107-127 (VLFE…FILL), 144-164 (YPLP…IPGV), 184-204 (AAEF…AYDL), 218-238 (LIGV…RYLL), and 248-268 (LFGW…LVWG).

The protein belongs to the UppP family.

The protein resides in the cell inner membrane. It carries out the reaction di-trans,octa-cis-undecaprenyl diphosphate + H2O = di-trans,octa-cis-undecaprenyl phosphate + phosphate + H(+). Its function is as follows. Catalyzes the dephosphorylation of undecaprenyl diphosphate (UPP). Confers resistance to bacitracin. The chain is Undecaprenyl-diphosphatase from Brucella anthropi (strain ATCC 49188 / DSM 6882 / CCUG 24695 / JCM 21032 / LMG 3331 / NBRC 15819 / NCTC 12168 / Alc 37) (Ochrobactrum anthropi).